Consider the following 295-residue polypeptide: MSNLKDIKRKIKSVQNTQKTTRAMKLVSTAKLRKAEEAARYSRVYALKINEVLSEIAYKINQYASVMTESKFFNTTKSVEKVDIIFVTADKGLCGGFNVQTIKTVRRMIDELKAKKIKVRLRAVGKKGIEFFNFQGVELLETYVGASSSPTYEKAQKIIKDAIDDFTNGITDKVVLIHNGYKNMISQEIRVNDIVPIEPSKIVAVETNSLMEFEPEDNYTKIMDELLNKYFEYSMYYALVDSLAAEHSARMQAMDNATNNAKQRVKQLNLAYNKARQESITTELIEIISGVESMK.

Belongs to the ATPase gamma chain family. F-type ATPases have 2 components, CF(1) - the catalytic core - and CF(0) - the membrane proton channel. CF(1) has five subunits: alpha(3), beta(3), gamma(1), delta(1), epsilon(1). CF(0) has three main subunits: a, b and c.

The protein localises to the cell inner membrane. In terms of biological role, produces ATP from ADP in the presence of a proton gradient across the membrane. The gamma chain is believed to be important in regulating ATPase activity and the flow of protons through the CF(0) complex. The chain is ATP synthase gamma chain from Campylobacter concisus (strain 13826).